Consider the following 332-residue polypeptide: Ribosomal RNA small subunit methyltransferase C (332 aa).

It belongs to the methyltransferase superfamily. RsmC family. In terms of assembly, monomer.

The protein localises to the cytoplasm. It carries out the reaction guanosine(1207) in 16S rRNA + S-adenosyl-L-methionine = N(2)-methylguanosine(1207) in 16S rRNA + S-adenosyl-L-homocysteine + H(+). In terms of biological role, specifically methylates the guanine in position 1207 of 16S rRNA in the 30S particle. This Pseudomonas putida (strain ATCC 47054 / DSM 6125 / CFBP 8728 / NCIMB 11950 / KT2440) protein is Ribosomal RNA small subunit methyltransferase C.